The primary structure comprises 273 residues: Beta-lactamase OXA-133 (273 aa).

Residues 1-17 form the signal peptide; sequence MNKYFTCYVVASLFFSG. The N-palmitoyl cysteine moiety is linked to residue C18. C18 carries S-diacylglycerol cysteine lipidation. S79 (acyl-ester intermediate) is an active-site residue. N6-carboxylysine is present on K82. 216–218 is a binding site for substrate; sequence KTG.

Belongs to the class-D beta-lactamase family.

The protein localises to the cell membrane. The enzyme catalyses a beta-lactam + H2O = a substituted beta-amino acid. Functionally, catalyzes the hydrolysis of beta-lactam antibiotics. The polypeptide is Beta-lactamase OXA-133 (Acinetobacter radioresistens).